Reading from the N-terminus, the 370-residue chain is Queuine tRNA-ribosyltransferase (370 aa).

The Proton acceptor role is filled by Asp-93. Substrate-binding positions include 93–97 (DSGGF), Asp-147, Gln-189, and Gly-216. Residues 247 to 253 (GVGSPDC) form an RNA binding region. Asp-266 (nucleophile) is an active-site residue. Positions 271 to 275 (TRIAR) are RNA binding; important for wobble base 34 recognition. Zn(2+)-binding residues include Cys-304, Cys-306, Cys-309, and His-335.

It belongs to the queuine tRNA-ribosyltransferase family. Homodimer. Within each dimer, one monomer is responsible for RNA recognition and catalysis, while the other monomer binds to the replacement base PreQ1. Zn(2+) serves as cofactor.

The enzyme catalyses 7-aminomethyl-7-carbaguanine + guanosine(34) in tRNA = 7-aminomethyl-7-carbaguanosine(34) in tRNA + guanine. Its pathway is tRNA modification; tRNA-queuosine biosynthesis. In terms of biological role, catalyzes the base-exchange of a guanine (G) residue with the queuine precursor 7-aminomethyl-7-deazaguanine (PreQ1) at position 34 (anticodon wobble position) in tRNAs with GU(N) anticodons (tRNA-Asp, -Asn, -His and -Tyr). Catalysis occurs through a double-displacement mechanism. The nucleophile active site attacks the C1' of nucleotide 34 to detach the guanine base from the RNA, forming a covalent enzyme-RNA intermediate. The proton acceptor active site deprotonates the incoming PreQ1, allowing a nucleophilic attack on the C1' of the ribose to form the product. After dissociation, two additional enzymatic reactions on the tRNA convert PreQ1 to queuine (Q), resulting in the hypermodified nucleoside queuosine (7-(((4,5-cis-dihydroxy-2-cyclopenten-1-yl)amino)methyl)-7-deazaguanosine). The sequence is that of Queuine tRNA-ribosyltransferase from Desulforamulus reducens (strain ATCC BAA-1160 / DSM 100696 / MI-1) (Desulfotomaculum reducens).